The primary structure comprises 435 residues: F-box/FBD/LRR-repeat protein At5g44980 (435 aa).

The F-box domain occupies 3–49 (RDYISELPDSLLTQILLELRTKDSVKTSVLSKRWRNLWLNVPGLELF). LRR repeat units follow at residues 88 to 114 (CKGYRDRLMELIGTLVDHGLQHLYVFM), 138 to 162 (LHNVELKNSDFVVSLPCLKILKLEN), 165 to 190 (HGEDGPLVVEKLISGCSVLEDLELIR), 191 to 217 (PFDIRTHKVLLLLRVSSQTLKSFTLHF), 250 to 275 (VKNLSSLFSIDIGTKFNPLRHEDLRM), and 324 to 349 (MWSSSTHLLEAFLESCPNLKNLILEY). An FBD domain is found at 355 to 405 (REQVDFTNVPQCLISTLEYVEIKEPNEKSTIKLVNYFLENSAVLKKLTLRF).

This chain is F-box/FBD/LRR-repeat protein At5g44980, found in Arabidopsis thaliana (Mouse-ear cress).